We begin with the raw amino-acid sequence, 368 residues long: CCA-adding enzyme (368 aa).

Positions 8 and 11 each coordinate ATP. Positions 8 and 11 each coordinate CTP. Mg(2+) is bound by residues D21 and D23. ATP contacts are provided by R91, R137, and R140. The CTP site is built by R91, R137, and R140.

This sequence belongs to the tRNA nucleotidyltransferase/poly(A) polymerase family. Bacterial CCA-adding enzyme type 2 subfamily. Requires Mg(2+) as cofactor.

It catalyses the reaction a tRNA precursor + 2 CTP + ATP = a tRNA with a 3' CCA end + 3 diphosphate. The enzyme catalyses a tRNA with a 3' CCA end + 2 CTP + ATP = a tRNA with a 3' CCACCA end + 3 diphosphate. Functionally, catalyzes the addition and repair of the essential 3'-terminal CCA sequence in tRNAs without using a nucleic acid template. Adds these three nucleotides in the order of C, C, and A to the tRNA nucleotide-73, using CTP and ATP as substrates and producing inorganic pyrophosphate. tRNA 3'-terminal CCA addition is required both for tRNA processing and repair. Also involved in tRNA surveillance by mediating tandem CCA addition to generate a CCACCA at the 3' terminus of unstable tRNAs. While stable tRNAs receive only 3'-terminal CCA, unstable tRNAs are marked with CCACCA and rapidly degraded. The polypeptide is CCA-adding enzyme (Pseudomonas putida (strain ATCC 700007 / DSM 6899 / JCM 31910 / BCRC 17059 / LMG 24140 / F1)).